Here is a 208-residue protein sequence, read N- to C-terminus: Methylthioribulose-1-phosphate dehydratase (208 aa).

The Zn(2+) site is built by H99 and H101.

Belongs to the aldolase class II family. MtnB subfamily. It depends on Zn(2+) as a cofactor.

It carries out the reaction 5-(methylsulfanyl)-D-ribulose 1-phosphate = 5-methylsulfanyl-2,3-dioxopentyl phosphate + H2O. The protein operates within amino-acid biosynthesis; L-methionine biosynthesis via salvage pathway; L-methionine from S-methyl-5-thio-alpha-D-ribose 1-phosphate: step 2/6. Functionally, catalyzes the dehydration of methylthioribulose-1-phosphate (MTRu-1-P) into 2,3-diketo-5-methylthiopentyl-1-phosphate (DK-MTP-1-P). In Aquifex aeolicus (strain VF5), this protein is Methylthioribulose-1-phosphate dehydratase.